Here is a 764-residue protein sequence, read N- to C-terminus: Polyadenylate-binding protein, cytoplasmic and nuclear (764 aa).

Residues 36-56 (VPEAQAEGAEAAPTPTAAPHP) are disordered. 4 RRM domains span residues 60–138 (ASLY…WSQR), 148–225 (GNIF…HHIP), 241–318 (TNVY…RAQK), and 344–462 (VNLY…LAQR). 2 disordered regions span residues 375-420 (VMRD…GDRK) and 587-634 (GRGG…PRGN). Composition is skewed to basic and acidic residues over residues 387–399 (KDEKDKENKKEGE) and 408–420 (GSEKKTEKKGDRK). Gly residues predominate over residues 587 to 596 (GRGGPAGRGP). A compositionally biased stretch (low complexity) spans 597-613 (QGIPAGIPQGLQGGPAV). Residues 657 to 734 (GSFLQAQLAT…ALAVYDEYLK (78 aa)) form the PABC domain. The span at 735 to 745 (TQGQQPTQQPA) shows a compositional bias: polar residues. The tract at residues 735–764 (TQGQQPTQQPAEANGEQPKAEEQKPEEQKA) is disordered. A compositionally biased stretch (basic and acidic residues) spans 752 to 764 (PKAEEQKPEEQKA).

This sequence belongs to the polyadenylate-binding protein type-1 family.

Its subcellular location is the cytoplasm. The protein localises to the nucleus. In terms of biological role, binds the poly(A) tail of mRNA. Appears to be an important mediator of the multiple roles of the poly(A) tail in mRNA biogenesis, stability and translation. In the nucleus, involved in both mRNA cleavage and polyadenylation. Is also required for efficient mRNA export to the cytoplasm. Acts in concert with a poly(A)-specific nuclease (PAN) to affect poly(A) tail shortening, which may occur concomitantly with either nucleocytoplasmic mRNA transport or translational initiation. In the cytoplasm, stimulates translation initiation and regulates mRNA decay through translation termination-coupled poly(A) shortening, probably mediated by PAN. The protein is Polyadenylate-binding protein, cytoplasmic and nuclear (pabp-1) of Neurospora crassa (strain ATCC 24698 / 74-OR23-1A / CBS 708.71 / DSM 1257 / FGSC 987).